Consider the following 452-residue polypeptide: MIQSPPGSGKSVVISEITKLATEKGGRVLFLVHRKELIDQITNSFKVHGVPLNQVELLTVGKAKNRLSVLRKPTLIITDEGHHGKAATYQKIYEFYADVPRLGFTATPWRMSGDGFKDTYDYMIEGKTVEWLINNKRLAPYQYYSLPSIDISKLRIKNGDYSNQSIDDALGKTIFGDVVQEYVKHANGQKAILYAHSVEASQSFAKEFQEAGIKAVHVDAKTPKNERDKLMLDFRNGRIKVLCNVDLISEGFDVPDCTVTILCRPTKSLVLFLQQSMRSMRYQHRKTAIIIDNVMNWHAHGLPDTHHDWKDYFEGGWKKKGQKNIVQAKQCPDCSAMWPLSQKMCNLCGHDFSIEEKHEKLRLEAELELIEKEKVKLKILSEKKFGSDLKKNWEIAQARAKVNKGNPLMKLLYFYAKSDWASASIEEIAEVTGKSNYQISQAKEWLQSKGIY.

One can recognise a Helicase ATP-binding domain in the interval 1-126 (MIQSPPGSGK…KDTYDYMIEG (126 aa)). The 157-residue stretch at 177–333 (DVVQEYVKHA…NIVQAKQCPD (157 aa)) folds into the Helicase C-terminal domain. A zinc finger lies at 331–348 (CPDCSAMWPLSQKMCNLC).

May play a role in either regulating bacteriophages replication or specifying expression of its own genes. The chain is 51.5 kDa protein from Lactococcus (lactic streptococci).